Here is a 450-residue protein sequence, read N- to C-terminus: TATA box-binding protein-associated factor RNA polymerase I subunit A (450 aa).

In terms of assembly, component of the transcription factor SL1/TIF-IB complex, composed of TBP and at least TAF1A, TAF1B, TAF1C and TAF1D. In the complex interacts directly with TBP, TAF1A and TAF1B. Interaction of the SL1/TIF-IB subunits with TBP excludes interaction of TBP with the transcription factor IID (TFIID) subunits. Interacts with UBFT. Interacts with CEBPA (isoform 1 and isoform 4). Part of Pol I pre-initiation complex (PIC), in which Pol I core assembles with RRN3 and promoter-bound UTBF and SL1/TIF-IB complex.

It localises to the nucleus. It is found in the nucleolus. Component of the transcription factor SL1/TIF-IB complex, which is involved in the assembly of the PIC (pre-initiation complex) during RNA polymerase I-dependent transcription. The rate of PIC formation probably is primarily dependent on the rate of association of SL1/TIF-IB with the rDNA promoter. SL1/TIF-IB is involved in stabilization of nucleolar transcription factor 1/UBTF on rDNA. Formation of SL1/TIF-IB excludes the association of TBP with TFIID subunits. This is TATA box-binding protein-associated factor RNA polymerase I subunit A (TAF1A) from Homo sapiens (Human).